We begin with the raw amino-acid sequence, 89 residues long: MYLDAAKKQEIFSKYGKSNTDTGSAEAQIALFSYRITHLTEHMKLNRKDYSTERALTMLVGKRRALLDYLKAKDITRYRDIIKELGLRK.

Belongs to the universal ribosomal protein uS15 family. In terms of assembly, part of the 30S ribosomal subunit. Forms a bridge to the 50S subunit in the 70S ribosome, contacting the 23S rRNA.

Functionally, one of the primary rRNA binding proteins, it binds directly to 16S rRNA where it helps nucleate assembly of the platform of the 30S subunit by binding and bridging several RNA helices of the 16S rRNA. Forms an intersubunit bridge (bridge B4) with the 23S rRNA of the 50S subunit in the ribosome. The polypeptide is Small ribosomal subunit protein uS15 (Bacteroides fragilis (strain ATCC 25285 / DSM 2151 / CCUG 4856 / JCM 11019 / LMG 10263 / NCTC 9343 / Onslow / VPI 2553 / EN-2)).